The following is a 348-amino-acid chain: Putative olfactory receptor 3A4 (348 aa).

The Extracellular portion of the chain corresponds to 1–28 (MDLGNSGNDSVVTKFVLLGLTETAALQP). Residue Asn8 is glycosylated (N-linked (GlcNAc...) asparagine). A helical membrane pass occupies residues 29-52 (ILFVIFLLAYVTTIGGTLSILAAI). Residues 53–60 (LMETKLHS) are Cytoplasmic-facing. A helical transmembrane segment spans residues 61-82 (PMYFFLGNLSLPDVGCVSVTVP). The Extracellular segment spans residues 83-103 (AMLSHFISNDRSIPYKACLSE). A disulfide bond links Cys100 and Cys192. A helical transmembrane segment spans residues 104-123 (LFFFHLLAGADCFLLTIMAY). Topologically, residues 124–143 (DRYLAICQSLTYSSRMSWGI) are cytoplasmic. The helical transmembrane segment at 144–161 (QQALVGMSCVFSFTNALT) threads the bilayer. The Extracellular segment spans residues 162-199 (QTVALSPLNFCGPNVINHFYCDLPQPFQLSCSSVHLNG). The helical transmembrane segment at 200–222 (QLLFVAAAFMGVAPLVLITVSYA) threads the bilayer. At 223 to 239 (HVAAAVLRIRSAEGRKK) the chain is on the cytoplasmic side. A helical membrane pass occupies residues 240-262 (AFSTCSSHLTVVGIFYGTGVFSY). Over 263–275 (TRLGSVESSDKDK) the chain is Extracellular. A helical membrane pass occupies residues 276–295 (GIGILNTVISPMLNPLIYWT). At 296–348 (SLLDVGCISHCSSDAGVSPGPPVQSSLCCLQFTALLSPPPGWGGLSPLNSHGL) the chain is on the cytoplasmic side.

The protein belongs to the G-protein coupled receptor 1 family.

It localises to the cell membrane. Functionally, odorant receptor. The chain is Putative olfactory receptor 3A4 (OR3A4P) from Homo sapiens (Human).